The chain runs to 244 residues: 1-(5-phosphoribosyl)-5-[(5-phosphoribosylamino)methylideneamino] imidazole-4-carboxamide isomerase (244 aa).

The Proton acceptor role is filled by Asp10. The active-site Proton donor is Asp129.

This sequence belongs to the HisA/HisF family.

The protein resides in the cytoplasm. It carries out the reaction 1-(5-phospho-beta-D-ribosyl)-5-[(5-phospho-beta-D-ribosylamino)methylideneamino]imidazole-4-carboxamide = 5-[(5-phospho-1-deoxy-D-ribulos-1-ylimino)methylamino]-1-(5-phospho-beta-D-ribosyl)imidazole-4-carboxamide. It functions in the pathway amino-acid biosynthesis; L-histidine biosynthesis; L-histidine from 5-phospho-alpha-D-ribose 1-diphosphate: step 4/9. The protein is 1-(5-phosphoribosyl)-5-[(5-phosphoribosylamino)methylideneamino] imidazole-4-carboxamide isomerase of Rhodococcus jostii (strain RHA1).